We begin with the raw amino-acid sequence, 717 residues long: Pre-mRNA-splicing factor ATP-dependent RNA helicase DEAH10 (717 aa).

The interval 1-29 (MPSMAQGELKSFVQNSRPNPKSPTVSPFS) is disordered. Over residues 12-29 (FVQNSRPNPKSPTVSPFS) the composition is skewed to polar residues. The Helicase ATP-binding domain occupies 51-256 (VEEVQKNDIL…FGGAKAVHVQ (206 aa)). 64–71 (GETGSGKT) contributes to the ATP binding site. A DEAH box motif is present at residues 162–165 (DEAH). One can recognise a Helicase C-terminal domain in the interval 278-453 (TLVTIFQIHF…NIILQLKALG (176 aa)).

Belongs to the DEAD box helicase family. DEAH subfamily. PRP22 sub-subfamily. In terms of tissue distribution, widely expressed but spatially and temporally regulated during development.

The protein localises to the nucleus. Its subcellular location is the nucleolus. It catalyses the reaction ATP + H2O = ADP + phosphate + H(+). Involved in pre-mRNA splicing. Plays a role during development in processes such as meristem maintenance, leaf morphogenesis and root morphogenesis. This is Pre-mRNA-splicing factor ATP-dependent RNA helicase DEAH10 from Arabidopsis thaliana (Mouse-ear cress).